An 821-amino-acid polypeptide reads, in one-letter code: Probable phosphoenolpyruvate synthase (821 aa).

His-444 functions as the Tele-phosphohistidine intermediate in the catalytic mechanism. Positions 543, 590, 687, 709, 710, 711, and 712 each coordinate substrate. Glu-687 serves as a coordination point for Mg(2+). Asp-712 lines the Mg(2+) pocket. Catalysis depends on Cys-759, which acts as the Proton donor.

The protein belongs to the PEP-utilizing enzyme family. It depends on Mg(2+) as a cofactor.

It carries out the reaction pyruvate + ATP + H2O = phosphoenolpyruvate + AMP + phosphate + 2 H(+). The protein operates within carbohydrate biosynthesis; gluconeogenesis. Its function is as follows. Catalyzes the phosphorylation of pyruvate to phosphoenolpyruvate. The sequence is that of Probable phosphoenolpyruvate synthase (ppsA) from Pyrococcus horikoshii (strain ATCC 700860 / DSM 12428 / JCM 9974 / NBRC 100139 / OT-3).